The primary structure comprises 429 residues: Serine--tRNA ligase (429 aa).

228-230 lines the L-serine pocket; that stretch reads TSE. 259 to 261 contributes to the ATP binding site; that stretch reads RAE. Position 282 (Glu-282) interacts with L-serine. 346 to 349 contacts ATP; it reads EISS. An L-serine-binding site is contributed by Ser-384.

Belongs to the class-II aminoacyl-tRNA synthetase family. Type-1 seryl-tRNA synthetase subfamily. Homodimer. The tRNA molecule binds across the dimer.

It is found in the cytoplasm. The catalysed reaction is tRNA(Ser) + L-serine + ATP = L-seryl-tRNA(Ser) + AMP + diphosphate + H(+). It carries out the reaction tRNA(Sec) + L-serine + ATP = L-seryl-tRNA(Sec) + AMP + diphosphate + H(+). Its pathway is aminoacyl-tRNA biosynthesis; selenocysteinyl-tRNA(Sec) biosynthesis; L-seryl-tRNA(Sec) from L-serine and tRNA(Sec): step 1/1. Functionally, catalyzes the attachment of serine to tRNA(Ser). Is also able to aminoacylate tRNA(Sec) with serine, to form the misacylated tRNA L-seryl-tRNA(Sec), which will be further converted into selenocysteinyl-tRNA(Sec). This chain is Serine--tRNA ligase, found in Anaplasma marginale (strain St. Maries).